The sequence spans 27 residues: GAVGEIQILLNNIASQLNGDQKKADKV.

Belongs to the TMP family.

The protein resides in the trichocyst. Structural protein that crystallize inside the trichocyst matrix. In Paramecium tetraurelia, this protein is Trichocyst matrix protein T4-C (T4C).